The sequence spans 460 residues: Arginine decarboxylase (460 aa).

An N6-(pyridoxal phosphate)lysine modification is found at Lys-226.

This sequence belongs to the Orn/Lys/Arg decarboxylase class-I family. Pyridoxal 5'-phosphate serves as cofactor.

It localises to the cytoplasm. It carries out the reaction L-arginine + H(+) = agmatine + CO2. Its pathway is amine and polyamine biosynthesis; agmatine biosynthesis; agmatine from L-arginine: step 1/1. Functionally, catalyzes the formation of agmatine from arginine. This is Arginine decarboxylase (speA) from Bacillus cereus (strain ATCC 14579 / DSM 31 / CCUG 7414 / JCM 2152 / NBRC 15305 / NCIMB 9373 / NCTC 2599 / NRRL B-3711).